The following is a 239-amino-acid chain: Small ribosomal subunit protein uS3 (239 aa).

Residues arginine 40–asparagine 108 form the KH type-2 domain. The tract at residues lysine 212–glutamate 239 is disordered. Over residues alanine 215–proline 226 the composition is skewed to basic and acidic residues. The span at arginine 227–glutamate 239 shows a compositional bias: basic residues.

The protein belongs to the universal ribosomal protein uS3 family. As to quaternary structure, part of the 30S ribosomal subunit. Forms a tight complex with proteins S10 and S14.

Functionally, binds the lower part of the 30S subunit head. Binds mRNA in the 70S ribosome, positioning it for translation. The protein is Small ribosomal subunit protein uS3 (rpsC) of Thermus thermophilus (strain ATCC BAA-163 / DSM 7039 / HB27).